Here is a 274-residue protein sequence, read N- to C-terminus: 2,3,4,5-tetrahydropyridine-2,6-dicarboxylate N-succinyltransferase (274 aa).

Substrate contacts are provided by Arg104 and Asp141.

Belongs to the transferase hexapeptide repeat family. In terms of assembly, homotrimer.

It localises to the cytoplasm. The catalysed reaction is (S)-2,3,4,5-tetrahydrodipicolinate + succinyl-CoA + H2O = (S)-2-succinylamino-6-oxoheptanedioate + CoA. The protein operates within amino-acid biosynthesis; L-lysine biosynthesis via DAP pathway; LL-2,6-diaminopimelate from (S)-tetrahydrodipicolinate (succinylase route): step 1/3. Its activity is regulated as follows. Inhibited by p-(chloromercuri)benzenesulfonic acid and cobalt. The polypeptide is 2,3,4,5-tetrahydropyridine-2,6-dicarboxylate N-succinyltransferase (dapD) (Unknown prokaryotic organism).